Consider the following 138-residue polypeptide: MAEKLKVELVTPYKKVLTEEVDEITATGALGEFGVLPGHAPFLTSLKIGELSYKKDGVISHLALNWGYFEVENDKVTVLVETAEKADEIDLERAKSALGRAEEALKKLNPEDKSFRVYEAALERALIRVQVAGKSGRR.

It belongs to the ATPase epsilon chain family. F-type ATPases have 2 components, CF(1) - the catalytic core - and CF(0) - the membrane proton channel. CF(1) has five subunits: alpha(3), beta(3), gamma(1), delta(1), epsilon(1). CF(0) has three main subunits: a, b and c.

It localises to the cell inner membrane. Produces ATP from ADP in the presence of a proton gradient across the membrane. The chain is ATP synthase epsilon chain from Geotalea daltonii (strain DSM 22248 / JCM 15807 / FRC-32) (Geobacter daltonii).